The chain runs to 254 residues: tRNA (guanine-N(1)-)-methyltransferase (254 aa).

S-adenosyl-L-methionine-binding positions include G121 and 141 to 146 (LGDYVL).

Belongs to the RNA methyltransferase TrmD family. In terms of assembly, homodimer.

Its subcellular location is the cytoplasm. It catalyses the reaction guanosine(37) in tRNA + S-adenosyl-L-methionine = N(1)-methylguanosine(37) in tRNA + S-adenosyl-L-homocysteine + H(+). Functionally, specifically methylates guanosine-37 in various tRNAs. The sequence is that of tRNA (guanine-N(1)-)-methyltransferase from Psychrobacter cryohalolentis (strain ATCC BAA-1226 / DSM 17306 / VKM B-2378 / K5).